A 432-amino-acid chain; its full sequence is UDP-N-acetylglucosamine 1-carboxyvinyltransferase (432 aa).

Position 22-23 (22-23 (KN)) interacts with phosphoenolpyruvate. UDP-N-acetyl-alpha-D-glucosamine is bound at residue arginine 96. The active-site Proton donor is cysteine 120. 2-(S-cysteinyl)pyruvic acid O-phosphothioketal is present on cysteine 120. Residues 125–129 (RPVDL), aspartate 310, and isoleucine 332 contribute to the UDP-N-acetyl-alpha-D-glucosamine site.

The protein belongs to the EPSP synthase family. MurA subfamily.

The protein localises to the cytoplasm. The catalysed reaction is phosphoenolpyruvate + UDP-N-acetyl-alpha-D-glucosamine = UDP-N-acetyl-3-O-(1-carboxyvinyl)-alpha-D-glucosamine + phosphate. It participates in cell wall biogenesis; peptidoglycan biosynthesis. Functionally, cell wall formation. Adds enolpyruvyl to UDP-N-acetylglucosamine. The chain is UDP-N-acetylglucosamine 1-carboxyvinyltransferase from Caulobacter sp. (strain K31).